A 137-amino-acid chain; its full sequence is MSRARGFAFALGSVALVSGAQLGMRWSMTRLPAPDQWLPALSAGSVDLAALAVVAAAIAAYALSMLCWLLALRDLPLGRAYSLLSISYALVYLLAASLPLFNEPFTLSKTLGVALVILGVITINSRSAPATSPRNTP.

Residues 1-5 (MSRAR) are Cytoplasmic-facing. The helical transmembrane segment at 6–26 (GFAFALGSVALVSGAQLGMRW) threads the bilayer. Residues 27–49 (SMTRLPAPDQWLPALSAGSVDLA) are Periplasmic-facing. The helical transmembrane segment at 50 to 70 (ALAVVAAAIAAYALSMLCWLL) threads the bilayer. The Cytoplasmic segment spans residues 71–80 (ALRDLPLGRA). The helical transmembrane segment at 81 to 101 (YSLLSISYALVYLLAASLPLF) threads the bilayer. Residue Asn-102 is a topological domain, periplasmic. The chain crosses the membrane as a helical span at residues 103–123 (EPFTLSKTLGVALVILGVITI). The Cytoplasmic segment spans residues 124-137 (NSRSAPATSPRNTP).

The protein belongs to the ArnF family. In terms of assembly, heterodimer of ArnE and ArnF.

It localises to the cell inner membrane. It functions in the pathway bacterial outer membrane biogenesis; lipopolysaccharide biosynthesis. Functionally, translocates 4-amino-4-deoxy-L-arabinose-phosphoundecaprenol (alpha-L-Ara4N-phosphoundecaprenol) from the cytoplasmic to the periplasmic side of the inner membrane. The sequence is that of Probable 4-amino-4-deoxy-L-arabinose-phosphoundecaprenol flippase subunit ArnF from Pseudomonas fluorescens (strain ATCC BAA-477 / NRRL B-23932 / Pf-5).